The sequence spans 362 residues: Fructose-bisphosphate aldolase (362 aa).

Ser-63 serves as a coordination point for D-glyceraldehyde 3-phosphate. The active-site Proton donor is the Asp-112. His-113, Asp-147, Glu-177, and His-229 together coordinate Zn(2+). Gly-230 contacts dihydroxyacetone phosphate. His-268 serves as a coordination point for Zn(2+). Dihydroxyacetone phosphate-binding positions include 269–271 and 290–293; these read GGS and NVDT.

It belongs to the class II fructose-bisphosphate aldolase family. As to quaternary structure, homodimer. Zn(2+) serves as cofactor.

It carries out the reaction beta-D-fructose 1,6-bisphosphate = D-glyceraldehyde 3-phosphate + dihydroxyacetone phosphate. It participates in carbohydrate degradation; glycolysis; D-glyceraldehyde 3-phosphate and glycerone phosphate from D-glucose: step 4/4. Functionally, catalyzes the aldol condensation of dihydroxyacetone phosphate (DHAP or glycerone-phosphate) with glyceraldehyde 3-phosphate (G3P) to form fructose 1,6-bisphosphate (FBP) in gluconeogenesis and the reverse reaction in glycolysis. This is Fructose-bisphosphate aldolase (fba) from Neurospora crassa (strain ATCC 24698 / 74-OR23-1A / CBS 708.71 / DSM 1257 / FGSC 987).